The following is a 224-amino-acid chain: Ribonuclease 3 (224 aa).

The region spanning Tyr4–Gly127 is the RNase III domain. Glu40 contacts Mg(2+). Residue Asp44 is part of the active site. Residues Asp113 and Glu116 each contribute to the Mg(2+) site. Residue Glu116 is part of the active site. One can recognise a DRBM domain in the interval Asp154–Glu223.

This sequence belongs to the ribonuclease III family. As to quaternary structure, homodimer. The cofactor is Mg(2+).

It localises to the cytoplasm. It carries out the reaction Endonucleolytic cleavage to 5'-phosphomonoester.. In terms of biological role, digests double-stranded RNA. Involved in the processing of primary rRNA transcript to yield the immediate precursors to the large and small rRNAs (23S and 16S). Processes some mRNAs, and tRNAs when they are encoded in the rRNA operon. Processes pre-crRNA and tracrRNA of type II CRISPR loci if present in the organism. The protein is Ribonuclease 3 of Aliarcobacter butzleri (strain RM4018) (Arcobacter butzleri).